Reading from the N-terminus, the 109-residue chain is Nucleoid-associated protein HS_1309 (109 aa).

It belongs to the YbaB/EbfC family. Homodimer.

It localises to the cytoplasm. The protein localises to the nucleoid. Functionally, binds to DNA and alters its conformation. May be involved in regulation of gene expression, nucleoid organization and DNA protection. The polypeptide is Nucleoid-associated protein HS_1309 (Histophilus somni (strain 129Pt) (Haemophilus somnus)).